The primary structure comprises 365 residues: TD and POZ domain-containing protein 1-like (365 aa).

Residues 19–149 (KFCYKWTISN…EDQLTICCKV (131 aa)) enclose the MATH domain. Positions 188-255 (TDCCLLVAGH…IYTGKAPYLH (68 aa)) constitute a BTB domain.

Belongs to the Tdpoz family.

This Mus musculus (Mouse) protein is TD and POZ domain-containing protein 1-like.